The sequence spans 544 residues: NXPE family member 4 (544 aa).

Positions 1–27 (MKISMINYKSLLALLFILASWIIFTVF) are cleaved as a signal peptide. 7 N-linked (GlcNAc...) asparagine glycosylation sites follow: N29, N38, N47, N48, N92, N160, and N210.

It belongs to the NXPE family.

The protein localises to the secreted. The chain is NXPE family member 4 (NXPE4) from Homo sapiens (Human).